Consider the following 36-residue polypeptide: Serum amyloid P-component (36 aa).

Positions 6–36 (SGKVFVIPMATSTSHVKLHARVSEPISAMTM) constitute a Pentraxin (PTX) domain.

The protein belongs to the pentraxin family. In terms of assembly, homopentamer. Discoid arrangement of 5 covalently bound subunits. Ca(2+) serves as cofactor.

Its subcellular location is the secreted. The protein is Serum amyloid P-component of Salmo salar (Atlantic salmon).